Consider the following 62-residue polypeptide: uncharacterized protein (62 aa).

2 4Fe-4S ferredoxin-type domains span residues 2–31 (AVTI…EIEG) and 32–62 (DKVV…VEPE). [4Fe-4S] cluster is bound by residues cysteine 10, cysteine 15, cysteine 18, cysteine 22, cysteine 42, cysteine 45, cysteine 48, and cysteine 52.

[4Fe-4S] cluster is required as a cofactor.

This is an uncharacterized protein from Methanocaldococcus jannaschii (strain ATCC 43067 / DSM 2661 / JAL-1 / JCM 10045 / NBRC 100440) (Methanococcus jannaschii).